Reading from the N-terminus, the 529-residue chain is MKEALSILCLALLVSVSEAEVTKPNSENFIECLRYRTSSENPITDSISIADNTTTFLSSYLSYTKNKRYSSPNFKKLLAIVAAKHVSHVQATVVCAKTNGIQLRIRSGGHDLEGLSYRSSVPFVILDMFNLRSITVNVLSKKAWVQAGATLGELYVKINEASQTLAFPAGVCPTVGVGGHISGGGYGNLMRKFGITVDHVSDAQLIDVNGKLLNRASMGEDLFWAIRGGGGASFGVILSWKINLVKVPKILTVFKVNKTLEQGGTDVLYKWQLVATKFPEDLFMRAWPQIINGAERGDRTIAVVFYAQFLGPADKLLAIMNQRLPELGLRREDCHEMSWFNTTLFWADYPAGTPKSVLLDRPTNPGFFKSKSDYVKKPIPKEGLEKLWKTMFKFNNIVWMQFNPYGGVMDQIPSTATAFPHRKGNMFKVQYSTTWLAANATEISLSMMKELYKVAEPYVSSNPREAFFNYRDIDIGSNPSDETNVDEAKIYGYKYFLGNLKRLMQVKAKYDPENFFKNEQSIPPVRVIE.

The signal sequence occupies residues 1 to 19 (MKEALSILCLALLVSVSEA). Cysteines 32 and 95 form a disulfide. N-linked (GlcNAc...) asparagine glycosylation is present at Asn-52. In terms of domain architecture, FAD-binding PCMH-type spans 69–247 (YSSPNFKKLL…LSWKINLVKV (179 aa)). Positions 110-172 (HDLEGLSYRS…QTLAFPAGVC (63 aa)) form a cross-link, 6-(S-cysteinyl)-8alpha-(pros-histidyl)-FAD (His-Cys). 3 N-linked (GlcNAc...) asparagine glycosylation sites follow: Asn-257, Asn-341, and Asn-439.

It belongs to the oxygen-dependent FAD-linked oxidoreductase family. FAD serves as cofactor. Post-translationally, the FAD cofactor is bound via a bicovalent 6-S-cysteinyl, 8alpha-N1-histidyl FAD linkage.

It is found in the secreted. Its subcellular location is the cell wall. Its function is as follows. Probable flavin-dependent oxidoreductase. The chain is Berberine bridge enzyme-like 7 from Arabidopsis thaliana (Mouse-ear cress).